A 984-amino-acid chain; its full sequence is Serine/threonine-protein kinase N2 (984 aa).

The residue at position 21 (Ser21) is a Phosphoserine. Residues Lys33–Val109 enclose the REM-1 1 domain. N6-acetyllysine is present on Lys77. Ser110 is subject to Phosphoserine. Residues Asp114–Thr133 form a disordered region. Phosphothreonine occurs at positions 121 and 124. 2 REM-1 domains span residues Thr121–Leu203 and Ala204–Lys284. A compositionally biased stretch (polar residues) spans Asp123–Thr133. 4 positions are modified to phosphoserine: Ser302, Ser306, Ser360, and Ser362. The tract at residues Ala351–Leu383 is disordered. The C2 domain occupies Ser353 to Phe473. The segment covering Thr364–Arg381 has biased composition (low complexity). The necessary to rescue apical junction formation stretch occupies residues Asn382 to Cys463. 3 positions are modified to phosphoserine: Ser535, Ser583, and Ser620. The disordered stretch occupies residues Ala558 to Leu584. Thr628 carries the post-translational modification Phosphothreonine. Ser631 bears the Phosphoserine mark. In terms of domain architecture, Protein kinase spans Phe657–Phe916. Residues Leu663–Val671 and Lys686 contribute to the ATP site. Asp782 acts as the Proton acceptor in catalysis. Position 816 is a phosphothreonine; by PDPK1 (Thr816). The segment at Arg917–Phe977 is necessary for the catalytic activity. The 68-residue stretch at Arg917–Cys984 folds into the AGC-kinase C-terminal domain. A Phosphoserine modification is found at Ser952. Thr958 carries the post-translational modification Phosphothreonine. The negatively regulates the responsiveness of the catalytic activity by cardiolipin and is required for optimal activation by the GTP-bound RhoA stretch occupies residues Asp978–Cys984.

This sequence belongs to the protein kinase superfamily. AGC Ser/Thr protein kinase family. PKC subfamily. Interacts (via the REM repeats) with RHOA (GTP-bound form preferentially) and interacts (via the REM repeats) with RAC1 (GTP-bound form preferentially); the interactions induce its autophosphorylation. Interacts with RHOC. Interacts with NCK1 and NCK2. Interacts with NCK1 (via SH3 domains). Interacts with CD44. Interacts (via C-terminal kinase domain) with PDPK1; the interaction stimulates PDPK1 kinase activity. Interacts with MAP3K2; the interaction activates PRK2 kinase activity in a MAP3K2-independent kinase activity. Interacts (via C-terminal domain) with AKT1; the interaction occurs with the C-terminal cleavage product of PRK2 in apoptotic cells. Interacts (via C-terminus) with PTPN13 (via PDZ 3 domain). Interacts with CDK10. In terms of assembly, (Microbial infection) Interacts with HCV NS5B (via N-terminal finger domain). Autophosphorylated. Phosphorylated during mitosis. Phosphorylated by CDK10. Post-translationally, activated by limited proteolysis with trypsin. Proteolytically cleaved by caspase-3 during the induction of apoptotic cell death. Ubiquitous. Expressed in numerous tumor cell lines, especially in bladder tumor cells.

The protein resides in the cytoplasm. It is found in the nucleus. It localises to the membrane. The protein localises to the cell projection. Its subcellular location is the lamellipodium. The protein resides in the cytoskeleton. It is found in the cleavage furrow. It localises to the midbody. The protein localises to the cell junction. The enzyme catalyses L-seryl-[protein] + ATP = O-phospho-L-seryl-[protein] + ADP + H(+). The catalysed reaction is L-threonyl-[protein] + ATP = O-phospho-L-threonyl-[protein] + ADP + H(+). Kinase activity is activated upon binding to GTP-bound Rhoa/Rac1 GTPases. Activated by caspase-3 (CASP3) cleavage during apoptosis. Activated by lipids, particularly cardiolipin and to a lesser extent by other acidic phospholipids and unsaturated fatty acids. Two specific sites, Thr-816 (activation loop of the kinase domain) and Thr-958 (turn motif), need to be phosphorylated for its full activation. In terms of biological role, PKC-related serine/threonine-protein kinase and Rho/Rac effector protein that participates in specific signal transduction responses in the cell. Plays a role in the regulation of cell cycle progression, actin cytoskeleton assembly, cell migration, cell adhesion, tumor cell invasion and transcription activation signaling processes. Phosphorylates CTTN in hyaluronan-induced astrocytes and hence decreases CTTN ability to associate with filamentous actin. Phosphorylates HDAC5, therefore lead to impair HDAC5 import. Direct RhoA target required for the regulation of the maturation of primordial junctions into apical junction formation in bronchial epithelial cells. Required for G2/M phases of the cell cycle progression and abscission during cytokinesis in a ECT2-dependent manner. Stimulates FYN kinase activity that is required for establishment of skin cell-cell adhesion during keratinocytes differentiation. Regulates epithelial bladder cells speed and direction of movement during cell migration and tumor cell invasion. Inhibits Akt pro-survival-induced kinase activity. Mediates Rho protein-induced transcriptional activation via the c-fos serum response factor (SRF). Involved in the negative regulation of ciliogenesis. Its function is as follows. (Microbial infection) Phosphorylates HCV NS5B leading to stimulation of HCV RNA replication. This chain is Serine/threonine-protein kinase N2 (PKN2), found in Homo sapiens (Human).